Reading from the N-terminus, the 216-residue chain is Ribosomal RNA large subunit methyltransferase E (216 aa).

The S-adenosyl-L-methionine site is built by glycine 71, tryptophan 73, aspartate 88, aspartate 104, and aspartate 126. Residue lysine 166 is the Proton acceptor of the active site.

It belongs to the class I-like SAM-binding methyltransferase superfamily. RNA methyltransferase RlmE family.

Its subcellular location is the cytoplasm. The enzyme catalyses uridine(2552) in 23S rRNA + S-adenosyl-L-methionine = 2'-O-methyluridine(2552) in 23S rRNA + S-adenosyl-L-homocysteine + H(+). Its function is as follows. Specifically methylates the uridine in position 2552 of 23S rRNA at the 2'-O position of the ribose in the fully assembled 50S ribosomal subunit. The polypeptide is Ribosomal RNA large subunit methyltransferase E (Wolbachia sp. subsp. Brugia malayi (strain TRS)).